We begin with the raw amino-acid sequence, 118 residues long: MHFCHIVGWGLVLAVLYLRTEAKPVAQAHQKSLRALLGEELAEYLVSGERGERSIDPKTRARLLRDIRADTRSRAAWTRLLNEHPNSRKIKGINKKGTSKGCFGLKLDRIGAMSGLGC.

The signal sequence occupies residues 1–22 (MHFCHIVGWGLVLAVLYLRTEA). A propeptide spanning residues 23 to 96 (KPVAQAHQKS…SRKIKGINKK (74 aa)) is cleaved from the precursor. A disulfide bridge connects residues Cys-102 and Cys-118.

The protein belongs to the natriuretic peptide family.

The protein localises to the secreted. Its function is as follows. Exhibits natriuretic and vasodepressor activity. Has a cGMP-stimulating activity. The sequence is that of C-type natriuretic peptide 2 from Aquarana catesbeiana (American bullfrog).